Consider the following 1181-residue polypeptide: Sodium/potassium/calcium exchanger 1 (1181 aa).

Topologically, residues 1-419 (MGKLIRMGTQ…DLFSVEDRRQ (419 aa)) are extracellular. 3 disordered regions span residues 107 to 232 (AMED…TSLK), 255 to 276 (SLVG…STTP), and 300 to 323 (STPA…GTST). Polar residues predominate over residues 124-136 (SLKNNYSPTTAGT). N-linked (GlcNAc...) asparagine glycosylation is present at asparagine 271. Residues 301 to 311 (TPATTEGSTAA) are compositionally biased toward polar residues. Residues 420–440 (GWVVLHIFGMTYVFVALAIVC) traverse the membrane as a helical segment. Residues 441-464 (DEYFVPALGVITDKLQISEDVAGA) lie on the Cytoplasmic side of the membrane. The stretch at 461 to 501 (VAGATFMAAGGSAPELFTSLIGVFISHSNVGIGTIVGSAVF) is one Alpha-1 repeat. A helical transmembrane segment spans residues 465–485 (TFMAAGGSAPELFTSLIGVFI). Residues 486 to 491 (SHSNVG) are Extracellular-facing. A helical membrane pass occupies residues 492-512 (IGTIVGSAVFNILFVIGTCAL). Residues 513–519 (FSREILN) are Cytoplasmic-facing. Residues 520 to 544 (LTWWPLFRDVSFYILDLSMLIVFFL) form a helical membrane-spanning segment. Residues 545 to 552 (DSLIAWWE) are Extracellular-facing. Residues 553 to 569 (SLLLLLAYALYVFTMKW) form a helical membrane-spanning segment. Residues 570 to 989 (NKQIERWVKE…SLEWPESRQK (420 aa)) lie on the Cytoplasmic side of the membrane. A disordered region spans residues 598–617 (PSDGAIEENEQQDNKKLKLP). A Phosphoserine modification is found at serine 625. Residues 650–983 (GEARPSKDKQ…ESEEPLSLEW (334 aa)) form a disordered region. Threonine 690 bears the Phosphothreonine mark. A compositionally biased stretch (acidic residues) spans 701 to 715 (GDQEEDPGCQEDVDE). 14 repeat units span residues 730-741 (ETEAEGKKDEEG), 742-754 (ETEA…GQEE), 755-766 (ETETKGKEKQEG), 767-778 (ETESEGKDEQEG), 779-791 (ETEA…DHEG), 792-804 (ETEA…EHEG), 805-817 (ETEA…EQEG), 818-830 (ETEA…EQEG), 831-843 (ETEA…EHEV), 844-856 (ETEA…NHEG), 857-869 (ETEA…DHEG), 870-881 (ETEAEGNVEHQG), 882-893 (ETEAEGKVEHEG), and 894-905 (ETEAGEKDEHEG). Composition is skewed to basic and acidic residues over residues 730 to 750 (ETEA…RKED), 757 to 775 (ETKG…GKDE), and 782 to 805 (AEGK…HEGE). The 14 X approximate tandem repeats stretch occupies residues 730-905 (ETEAEGKKDE…EAGEKDEHEG (176 aa)). Acidic residues predominate over residues 806-820 (TEAEGTEDEQEGETE). Over residues 834–906 (AEGKEVEHEV…AGEKDEHEGQ (73 aa)) the composition is skewed to basic and acidic residues. 2 stretches are compositionally biased toward acidic residues: residues 921–931 (GEAEANAEDQC) and 949–979 (GDSE…EEPL). The helical transmembrane segment at 990–1010 (QAIYLFLLPIVFPLWLTIPDV) threads the bilayer. The Extracellular portion of the chain corresponds to 1011 to 1017 (RRQEARK). Residues 1018-1038 (FFVITFLGSIIWIAMFSYLMV) form a helical membrane-spanning segment. Residues 1039 to 1053 (WWAHQVGETIGISEE) lie on the Cytoplasmic side of the membrane. Residues 1054 to 1074 (IMGLTILAAGTSIPDLITSVI) form a helical membrane-spanning segment. Residues 1061-1092 (AAGTSIPDLITSVIVARKGLGDMAVSSSVGSN) form an Alpha-2 repeat. Over 1075-1092 (VARKGLGDMAVSSSVGSN) the chain is Extracellular. The chain crosses the membrane as a helical span at residues 1093–1113 (IFDITVGLPVPWLLFSLINAL). Residues 1114-1121 (QPIPVSSN) are Cytoplasmic-facing. The chain crosses the membrane as a helical span at residues 1122-1142 (GLFCAIVLLFLMLLFVIFSIA). Topologically, residues 1143–1150 (SCKWRMNK) are extracellular. A helical membrane pass occupies residues 1151-1171 (ILGFTMFLLYFVFLVISVMLE). Over 1172-1181 (DRIISCPVSV) the chain is Cytoplasmic.

It belongs to the Ca(2+):cation antiporter (CaCA) (TC 2.A.19) family. SLC24A subfamily. In terms of processing, the uncleaved signal sequence is required for efficient membrane targeting and proper membrane integration and topology. Highly expressed in the eye.

It localises to the cell membrane. It carries out the reaction Ca(2+)(out) + K(+)(out) + 4 Na(+)(in) = Ca(2+)(in) + K(+)(in) + 4 Na(+)(out). Functionally, calcium, potassium:sodium antiporter that transports 1 Ca(2+) and 1 K(+) in exchange for 4 Na(+). Critical component of the visual transduction cascade, controlling the calcium concentration of outer segments during light and darkness. Light causes a rapid lowering of cytosolic free calcium in the outer segment of both retinal rod and cone photoreceptors and the light-induced lowering of calcium is caused by extrusion via this protein which plays a key role in the process of light adaptation. In Rattus norvegicus (Rat), this protein is Sodium/potassium/calcium exchanger 1 (Slc24a1).